Reading from the N-terminus, the 646-residue chain is MMLRRNAVRSLKTMEISVSNVVNSGSIAMLRGKLANVVLSDRTYHSSPIFHKNVPKGVLDKKNGREQRKTEQNVFNVDPASPWRHELLSFDECVSSALKYSTTPLQNTYKRIGNNQLNKNPSFAMFWDSMGRAMELYYSLRESPDFNAYRVSRLIHLLHNGLRSTRDQLVKLSRKPDYDSQSFHKEMMNFLCNSLKDISDDILIGKVSVSGYGATHLLTSFKELSFDDDCIRIWEASKNLSDETTSQAFQEPKVVGFMLPLLYAKTRSLTEPNELYNQIIQSKEFIHPNLYSGLIKVFIKAEDYEKALSLFGQLCEKAEVRNYGYLIETHLSFIGDSKNLTLAESFFDKIINDEMPYKIILQVSTVNSFLQNIWKAQNDFDHVYRIWEKAVKFYGNTVNPGILSSLNNTFFTIFFENYINDNINGFRKLQEIITFYSGVKKIDEPFFNVMLTRASIWHERSIIDFIDKNYTLYHIPRTIISYRILLKSLGSIDNTNNEEILDRWLELVKKLNELGQQYIANADLSALRDATVVWSQSKRDEKVFSAKAKGTPATTTTTEDDIKVPKPLENLKNEDSTSNSEDRIELYLKILKRYTPYFRATKQVYRYTTGCAESYPILNEYLSGYSDLSAEDIPVPQLHSFIAKEQ.

Residues 1–14 (MMLRRNAVRSLKTM) constitute a mitochondrion transit peptide. Residues 15 to 51 (EISVSNVVNSGSIAMLRGKLANVVLSDRTYHSSPIFH) constitute a propeptide, removed in mature form. Residues 209-238 (VSGYGATHLLTSFKELSFDDDCIRIWEASK) form a PPR1 repeat. A PPR2 repeat occupies 251-282 (EPKVVGFMLPLLYAKTRSLTEPNELYNQIIQS). Residues 288 to 317 (PNLYSGLIKVFIKAEDYEKALSLFGQLCEK) form a PPR3 repeat. Residues 323–353 (YGYLIETHLSFIGDSKNLTLAESFFDKIIND) form a PPR4 repeat. A PPR5 repeat occupies 363 to 394 (VSTVNSFLQNIWKAQNDFDHVYRIWEKAVKFY). A PPR6 repeat occupies 401–439 (GILSSLNNTFFTIFFENYINDNINGFRKLQEIITFYSGV). The PPR7 repeat unit spans residues 444–473 (EPFFNVMLTRASIWHERSIIDFIDKNYTLY). A PPR8 repeat occupies 481–514 (SYRILLKSLGSIDNTNNEEILDRWLELVKKLNEL).

Belongs to the RMD9 family. In terms of assembly, monomer. Phosphorylated. Phosphorylation promotes binding to RNA.

It is found in the mitochondrion inner membrane. Binds the RNA motif 5'-AAUAA[U/C]AUUCUU-3' in the 3'-UTR of mitochondrial mRNAs. Involved in the processing or stability of mitochondrial mRNAs. The polypeptide is RNA-binding protein RMD9, mitochondrial (Saccharomyces cerevisiae (strain ATCC 204508 / S288c) (Baker's yeast)).